Here is a 271-residue protein sequence, read N- to C-terminus: GATA transcription factor 19 (271 aa).

Residues M1–A23 are disordered. The region spanning L33–G68 is the Tify domain. The CCT domain occupies R95–R137. The GATA-type zinc-finger motif lies at C166–C193. The disordered stretch occupies residues N238–S271. Positions Q252–S271 are enriched in basic and acidic residues.

This sequence belongs to the type IV zinc-finger family. Class C subfamily.

It localises to the nucleus. Its function is as follows. Transcriptional activator that specifically binds 5'-GATA-3' or 5'-GAT-3' motifs within gene promoters. The protein is GATA transcription factor 19 of Oryza sativa subsp. indica (Rice).